We begin with the raw amino-acid sequence, 232 residues long: 2,3,4,5-tetrahydropyridine-2,6-dicarboxylate N-acetyltransferase (232 aa).

This sequence belongs to the transferase hexapeptide repeat family. DapH subfamily.

It carries out the reaction (S)-2,3,4,5-tetrahydrodipicolinate + acetyl-CoA + H2O = L-2-acetamido-6-oxoheptanedioate + CoA. It participates in amino-acid biosynthesis; L-lysine biosynthesis via DAP pathway; LL-2,6-diaminopimelate from (S)-tetrahydrodipicolinate (acetylase route): step 1/3. Functionally, catalyzes the transfer of an acetyl group from acetyl-CoA to tetrahydrodipicolinate. In Streptococcus suis (strain 98HAH33), this protein is 2,3,4,5-tetrahydropyridine-2,6-dicarboxylate N-acetyltransferase.